We begin with the raw amino-acid sequence, 154 residues long: Anaerobic ribonucleoside-triphosphate reductase-activating protein (154 aa).

[4Fe-4S] cluster-binding residues include C26, C30, and C33. Residues 32–34 (GCY) and G74 each bind S-adenosyl-L-methionine.

The protein belongs to the organic radical-activating enzymes family. As to quaternary structure, forms a tetramer composed of two NrdD and two NrdG subunits. [4Fe-4S] cluster is required as a cofactor.

It is found in the cytoplasm. The enzyme catalyses glycyl-[protein] + reduced [flavodoxin] + S-adenosyl-L-methionine = glycin-2-yl radical-[protein] + semiquinone [flavodoxin] + 5'-deoxyadenosine + L-methionine + H(+). Activation of anaerobic ribonucleoside-triphosphate reductase under anaerobic conditions by generation of an organic free radical, using S-adenosylmethionine and reduced flavodoxin as cosubstrates to produce 5'-deoxy-adenosine. This Salmonella typhi protein is Anaerobic ribonucleoside-triphosphate reductase-activating protein (nrdG).